Consider the following 441-residue polypeptide: ATP-dependent protease ATPase subunit HslU (441 aa).

ATP contacts are provided by residues valine 18, 60–65 (GVGKTE), aspartate 254, glutamate 319, and arginine 391.

It belongs to the ClpX chaperone family. HslU subfamily. As to quaternary structure, a double ring-shaped homohexamer of HslV is capped on each side by a ring-shaped HslU homohexamer. The assembly of the HslU/HslV complex is dependent on binding of ATP.

It localises to the cytoplasm. Functionally, ATPase subunit of a proteasome-like degradation complex; this subunit has chaperone activity. The binding of ATP and its subsequent hydrolysis by HslU are essential for unfolding of protein substrates subsequently hydrolyzed by HslV. HslU recognizes the N-terminal part of its protein substrates and unfolds these before they are guided to HslV for hydrolysis. This is ATP-dependent protease ATPase subunit HslU from Verminephrobacter eiseniae (strain EF01-2).